A 214-amino-acid chain; its full sequence is Probable transaldolase 1 (214 aa).

The active-site Schiff-base intermediate with substrate is the Lys83.

Belongs to the transaldolase family. Type 3B subfamily.

It is found in the cytoplasm. The catalysed reaction is D-sedoheptulose 7-phosphate + D-glyceraldehyde 3-phosphate = D-erythrose 4-phosphate + beta-D-fructose 6-phosphate. Its pathway is carbohydrate degradation; pentose phosphate pathway; D-glyceraldehyde 3-phosphate and beta-D-fructose 6-phosphate from D-ribose 5-phosphate and D-xylulose 5-phosphate (non-oxidative stage): step 2/3. In terms of biological role, transaldolase is important for the balance of metabolites in the pentose-phosphate pathway. This is Probable transaldolase 1 from Listeria monocytogenes serotype 4b (strain F2365).